The primary structure comprises 217 residues: MIQTRNQYLQFMLVMLAAWGISWGARFVMEQAVLLYGSGKNYLFFSHGTVLMYLLCVFLVYRRWIAPLPVVGQLRNVGVPWLVGAMAVVYVGVFLLGKALALPAEPFMTKLFADKSIPDVILTLLTIFILAPLNEETLFRGIMLNVFRSRYCWTMWLGALITSLLFVAAHSQYQNLLTLAELFLVGLITSVARIRSGGLLLPVLLHMEATTLGLLFG.

This is an uncharacterized protein from Escherichia coli.